A 433-amino-acid chain; its full sequence is MNKGIERSVSVVLGAQWGDEGKGKLVDLLSESSTVVCRCQGGNNAGHTVVAGGKEYFFHLLPSGIINPNVLAIIGNGVVVNLEALFQEINEAVNKGLLDVASRLRISDRCHLVFPLHQEIDRMEEELRGLNLLGTTKKGIGPAYSSKVTRNGLRVCDLIGDWDQFTAKYKELVNYVKRRYPALEINVEESLEQLKTYREMLSGMVCDSVLLINKLTESKQTKILVEGAQSCMLDIDFGTYPHVTSSNCSIGGVCTGLGLSPSRVGSVYGVIKAYTTRVGSGPFPTELLDGIGEYIQKKGNEWGVTTKRMRRIGWLDTVVIRYAHIINDFNALALTKIDVLDGLKEVKIARAYVDPETGNELSSFPADPFILSRVVVIYETLPGWKASTQNCRVYDELPPAAKTFIETVEKLLNIPIRWIGTGASRDSIIIRSV.

Residues 18 to 24 (GDEGKGK) and 46 to 48 (GHT) contribute to the GTP site. Asp19 serves as the catalytic Proton acceptor. The Mg(2+) site is built by Asp19 and Gly46. Residues 19–22 (DEGK), 44–47 (NAGH), Thr136, Arg150, Gln229, Thr244, and Arg308 contribute to the IMP site. Residue His47 is the Proton donor of the active site. 304–310 (VTTKRMR) provides a ligand contact to substrate. GTP is bound by residues Arg310, 336-338 (KID), and 420-422 (GTG).

This sequence belongs to the adenylosuccinate synthetase family. In terms of assembly, homodimer. It depends on Mg(2+) as a cofactor.

It localises to the cytoplasm. The catalysed reaction is IMP + L-aspartate + GTP = N(6)-(1,2-dicarboxyethyl)-AMP + GDP + phosphate + 2 H(+). The protein operates within purine metabolism; AMP biosynthesis via de novo pathway; AMP from IMP: step 1/2. Plays an important role in the de novo pathway and in the salvage pathway of purine nucleotide biosynthesis. Catalyzes the first committed step in the biosynthesis of AMP from IMP. In Schistosoma japonicum (Blood fluke), this protein is Adenylosuccinate synthetase.